A 130-amino-acid polypeptide reads, in one-letter code: Large ribosomal subunit protein eL32 (130 aa).

The protein belongs to the eukaryotic ribosomal protein eL32 family.

The sequence is that of Large ribosomal subunit protein eL32 (rpl32e) from Pyrococcus abyssi (strain GE5 / Orsay).